The chain runs to 204 residues: Cysteine-rich protein 3 (204 aa).

The 62-residue stretch at 3 to 64 (WTCPRCQQPV…KPCYGALFGP (62 aa)) folds into the LIM zinc-binding 1 domain. The disordered stretch occupies residues 88-107 (ISLSPSNFSPPRPRTGLSRA). The LIM zinc-binding 2 domain occupies 122–183 (SLCPGCGDPV…IPCYGYLFGP (62 aa)).

As to expression, expressed specifically by the thymus.

The protein localises to the cytoplasm. This Mus musculus (Mouse) protein is Cysteine-rich protein 3 (Crip3).